A 279-amino-acid polypeptide reads, in one-letter code: Uroplakin-3b (279 aa).

The first 26 residues, 1–26 (MGLPSRQPRLWLLLLVVLGWPQPCLT), serve as a signal peptide directing secretion. The Lumenal portion of the chain corresponds to 27–200 (LDLIPYTPRI…DTWPGRRSGD (174 aa)). N-linked (GlcNAc...) asparagine glycosylation occurs at asparagine 77. Residues 201-221 (MIIITSILSSLAGLLLLAFLA) form a helical membrane-spanning segment. At 222-279 (ASSVRFSSLWWPEEAPEQLRIGSFMGKRYMTHHIPPSEAATLPVGCEPGLERFPSLSP) the chain is on the cytoplasmic side.

Belongs to the uroplakin-3 family. As to quaternary structure, heterodimer with uroplakin-1B (UPK1B). As to expression, expression is urothelium-specific.

It localises to the cell membrane. Its function is as follows. Component of the asymmetric unit membrane (AUM); a highly specialized biomembrane elaborated by terminally differentiated urothelial cells. May play an important role in AUM-cytoskeleton interaction in terminally differentiated urothelial cells. It also contributes to the formation of urothelial glycocalyx which may play an important role in preventing bacterial adherence. The sequence is that of Uroplakin-3b (UPK3B) from Bos taurus (Bovine).